The primary structure comprises 710 residues: Subtilisin-like protease SBT4.8 (710 aa).

The signal sequence occupies residues 1-23 (MVKRASFCLLSCLIILFLSSVSA). The propeptide at 24-111 (IIYDPQDKQV…VFRSKNYKLQ (88 aa)) is activation peptide. The Inhibitor I9 domain maps to 33 to 110 (VYVVYMGSLP…SVFRSKNYKL (78 aa)). One can recognise a Peptidase S8 domain in the interval 115–559 (SWDFMGMKEG…AGHVDPIAAI (445 aa)). D143 (charge relay system) is an active-site residue. N174 carries an N-linked (GlcNAc...) asparagine glycan. H198 functions as the Charge relay system in the catalytic mechanism. Residues N221, N364, and N419 are each glycosylated (N-linked (GlcNAc...) asparagine). Positions 354-414 (KYPLEYGDYL…VLSQDDFDSL (61 aa)) constitute a PA domain. The active-site Charge relay system is the S498. Residues N535, N568, N580, N618, and N636 are each glycosylated (N-linked (GlcNAc...) asparagine).

This sequence belongs to the peptidase S8 family. The C-terminal propeptide is autocleaved.

It localises to the secreted. This is Subtilisin-like protease SBT4.8 from Arabidopsis thaliana (Mouse-ear cress).